A 216-amino-acid polypeptide reads, in one-letter code: Probable flavin-dependent thymidylate synthase (216 aa).

The 216-residue stretch at 1-216 (MSAKLISVTK…PSIAKALDWV (216 aa)) folds into the ThyX domain. FAD contacts are provided by residues serine 55, 78-80 (RHR), and glutamate 86. DUMP contacts are provided by residues 75–78 (QVLR), 86–90 (EFSQR), and arginine 155. Residues 78 to 88 (RHRSFHFQEFS) carry the ThyX motif motif. An FAD-binding site is contributed by histidine 177. Arginine 182 lines the dUMP pocket. Arginine 182 serves as the catalytic Involved in ionization of N3 of dUMP, leading to its activation.

Belongs to the thymidylate synthase ThyX family. As to quaternary structure, homotetramer. FAD serves as cofactor.

The enzyme catalyses dUMP + (6R)-5,10-methylene-5,6,7,8-tetrahydrofolate + NADPH + H(+) = dTMP + (6S)-5,6,7,8-tetrahydrofolate + NADP(+). It functions in the pathway pyrimidine metabolism; dTTP biosynthesis. Its function is as follows. Catalyzes the reductive methylation of 2'-deoxyuridine-5'-monophosphate (dUMP) to 2'-deoxythymidine-5'-monophosphate (dTMP) while utilizing 5,10-methylenetetrahydrofolate (mTHF) as the methyl donor, and NADPH and FADH(2) as the reductant. This chain is Probable flavin-dependent thymidylate synthase, found in Paramecium bursaria Chlorella virus 1 (PBCV-1).